The sequence spans 483 residues: Pre-glycoprotein polyprotein GP complex (483 aa).

G2 carries the N-myristoyl glycine; by host lipid modification. Topologically, residues 2–17 are extracellular; sequence GQFISFMQEIPIFLQE. A helical transmembrane segment spans residues 18–32; sequence ALNIALVAVSLICIV. A topological domain (cytoplasmic) is located at residue K33. A helical membrane pass occupies residues 34–53; the sequence is GLVNLYRCGLFQLMVFLVLA. Extracellular-side segments run 54 to 58 and 59 to 422; these read GRSCS and EETF…TLVD. C57 contacts Zn(2+). 2 N-linked (GlcNAc...) asparagine; by host glycosylation sites follow: N83 and N95. Cystine bridges form between C92–C224, C134–C162, C205–C211, C269–C282, C291–C300, and C354–C375. N-linked (GlcNAc...) asparagine; by host glycans are attached at residues N164 and N176. N-linked (GlcNAc...) asparagine; by host glycosylation is found at N355, N363, N380, and N385. A helical transmembrane segment spans residues 423–443; the sequence is ICFWSTVFFTSTLFLHLIGFP. The Cytoplasmic segment spans residues 444–483; it reads THEHIRGEGCPLPHRLNSMGGCRCGKYLPLKKPTIWHRRH. 7 residues coordinate Zn(2+): H445, H447, C453, H457, C465, C467, and H483.

It belongs to the arenaviridae GPC protein family. In terms of assembly, homotetramer; disulfide-linked. Homotetramer. GP2 homotetramers bind through ionic interactions with GP1 homotetramers to form the GP complex together with the stable signal peptide. The GP-C polyprotein interacts with the host protease MBTPS1/SKI-1 resulting in the polyprotein processing. Specific enzymatic cleavages in vivo yield mature proteins. GP-C polyprotein is cleaved in the endoplasmic reticulum by the host protease MBTPS1. Only cleaved glycoprotein is incorporated into virions. In terms of processing, the SSP remains stably associated with the GP complex following cleavage by signal peptidase and plays crucial roles in the trafficking of GP through the secretory pathway. Post-translationally, myristoylation is necessary for GP2-mediated fusion activity.

It localises to the virion membrane. It is found in the host endoplasmic reticulum membrane. Its subcellular location is the host Golgi apparatus membrane. The protein resides in the host cell membrane. Its function is as follows. Class I viral fusion protein that directs fusion of viral and host endosomal membranes, leading to delivery of the nucleocapsid into the cytoplasm. Membrane fusion is mediated by irreversible conformational changes induced upon acidification in the endosome. In terms of biological role, stable signal peptide (SSP): cleaved and functions as a signal peptide. In addition, it is also retained as the third component of the GP complex. The SSP is required for efficient glycoprotein expression, post-translational maturation cleavage of GP1 and GP2, glycoprotein transport to the cell surface plasma membrane, formation of infectious virus particles, and acid pH-dependent glycoprotein-mediated cell fusion. Functionally, interacts with the host receptor. This is Pre-glycoprotein polyprotein GP complex from Artibeus (neotropical fruit bats).